The chain runs to 193 residues: Probable GTP-binding protein EngB (193 aa).

The region spanning 22–193 (SFPEIVFAGR…LAHFDQYICQ (172 aa)) is the EngB-type G domain. GTP is bound by residues 30-37 (GRSNVGKS), 57-61 (GKTRL), 75-78 (DLPG), 142-145 (TKYD), and 172-174 (YSS). Positions 37 and 59 each coordinate Mg(2+).

This sequence belongs to the TRAFAC class TrmE-Era-EngA-EngB-Septin-like GTPase superfamily. EngB GTPase family. Mg(2+) is required as a cofactor.

Its function is as follows. Necessary for normal cell division and for the maintenance of normal septation. The polypeptide is Probable GTP-binding protein EngB (Pelodictyon phaeoclathratiforme (strain DSM 5477 / BU-1)).